Reading from the N-terminus, the 337-residue chain is MSVEQKLYLITRNLQEILGEEELKRIVSERELNVYWGTAITGKPHIAYLVPLMKIKDFVDAGCNVKILFADIHGFLDNLKAPIEKVQHRCAYYEKLIKSALKMLCVDLDRIQFVKGSEFQKSERYTMDLYRILSITSKHDAKKAGAEVVRQVENPMVSSLVYPSMQALDEVHLSVDAQFGGVDQRKIFTYARKYLPLLNYEKRIHLMSPMLPGLNSDKMSSSDDLSKIDLMDSKEAIWRKIRKCFCEEGNKDNGLMMIFSHIVFPILQLKGECVRITDRDGREMAFEKYQEFEEEFVRKSIHPGDLKSNAARLIDEIIRPIREEMEKDLDMVREAYN.

Tyr-35 is an L-tyrosine binding site. Residues 40-48 (ITGKPHIAY) carry the 'HIGH' region motif. The L-tyrosine site is built by Tyr-162, Gln-166, Asp-169, and Gln-184. The short motif at 218–222 (KMSSS) is the 'KMSKS' region element.

This sequence belongs to the class-I aminoacyl-tRNA synthetase family. Homodimer.

The protein localises to the cytoplasm. It carries out the reaction tRNA(Tyr) + L-tyrosine + ATP = L-tyrosyl-tRNA(Tyr) + AMP + diphosphate + H(+). In Encephalitozoon cuniculi (strain GB-M1) (Microsporidian parasite), this protein is Probable tyrosine--tRNA ligase, cytoplasmic.